The chain runs to 1182 residues: MAQLLFRKTTQDFRDCFGLKHEILASIYNEKSTFSSENGSIQILEEAEVNALGELVRDGTVAISFGPGIYSRMFSHLRDDSDYRSALTDCVAHGWKQTRDARDVREWQRSAAIMCAERYMYKVRQAYKRVVENLDHMYAWHYLTEGPSEHVFILPAMYESVRHETTSEAYGMQCGGIIGGNVSLMLPRDEQYTTLFKAWLMSLAKMSLSELREPHWNGVRVQLSRDHRILYYGDLLPSDGDITYLVNKLEYHTIWFPEGDFETMMGAMLRDSFPAGCHAHLNIPVPHYFVFDTDDDLILRCWKGVRDTWIKLRLGYEEGGVNDSRMSEALIVNRDLPADLSESLFCCCLARGVSRDQVRTLKDVRNVAQAQIRHVVSGQGVWWEHMVRGQPLACSIRPGKVVLVVDYEDGPLHVSIRVRLLNVHYARELGMKASDVVVRIPTSNRPRWVETKEYERSLRFYEFRPGPITTEFHHVFAFYCYWGCGRVEKRRHLYQIREVRRGNLYSRSRFLRRIAEDGEKVKVQGRTHVTATRAVQHEKCNPNEDIIYSREFARELALTGKIKEAGALAVIYTCMQTLGVDIDPPAGWVREGRPKQRTAKLCHLLTRILTAFFSYRGGSSSLVCSVMVVIFSIILYYLRLKHVDQEVRYDELTLIWYGDGGVELQRILREVSMTRFVAVAGDPATPEYIAQAKLWANKKSNIVVFNYARPYERGPVFENLIRDTVSLREAAEVFILRTDDSWSQYGNTVVAMLGEGDFCDLVHFGASCDPMEHYFVHISQPPGTNPGYEPANQEEPFEEWLYETQAMERVIPTTWESEIVDARGMLVSILTFHFRFAGWFELDVPGDDIGRGLQLMGSINKVVHVSCFVQNGRRYFRLSVDLDVDRVLRNMRHEGDALMAAELFVTDAVLVCEGLVVGEMHRLQRTYRSVNAMVYHQGMTNFIVYEWMRRVLLTNLLDEMLVFDIGGRNGELSGWVVQDVKVHYFCVDPAGEEAIPKGQRVRLPGGRAIWDIAETVEQNVARYLEVVGKPQTPAEGIILIFSNSIVAAYEAAGRNNRNQVANLYQQLQAWGGRVFIRDQLVPTRANPGDYWIQAAFPGNVYPPGLCEDFNIDPDAGILPLRYPDTGQGATDVVLANGRLGHLTSSWFQSLYCGAARGFILNGFGRLIWPIYCRHVVVLATRP.

Residues 618-638 (GSSSLVCSVMVVIFSIILYYL) form a helical membrane-spanning segment.

It is found in the host membrane. This is an uncharacterized protein from Callospermophilus lateralis (Golden-mantled ground squirrel).